We begin with the raw amino-acid sequence, 439 residues long: 3-phosphoshikimate 1-carboxyvinyltransferase (439 aa).

Residues K29 and R34 each contribute to the 3-phosphoshikimate site. A phosphoenolpyruvate-binding site is contributed by K29. Phosphoenolpyruvate is bound by residues G99 and R128. 3-phosphoshikimate-binding residues include S171, S172, Q173, S199, D316, and K343. Q173 is a phosphoenolpyruvate binding site. The active-site Proton acceptor is D316. The phosphoenolpyruvate site is built by R347, R390, and K416.

This sequence belongs to the EPSP synthase family. Monomer.

It localises to the cytoplasm. The catalysed reaction is 3-phosphoshikimate + phosphoenolpyruvate = 5-O-(1-carboxyvinyl)-3-phosphoshikimate + phosphate. The protein operates within metabolic intermediate biosynthesis; chorismate biosynthesis; chorismate from D-erythrose 4-phosphate and phosphoenolpyruvate: step 6/7. Its function is as follows. Catalyzes the transfer of the enolpyruvyl moiety of phosphoenolpyruvate (PEP) to the 5-hydroxyl of shikimate-3-phosphate (S3P) to produce enolpyruvyl shikimate-3-phosphate and inorganic phosphate. The chain is 3-phosphoshikimate 1-carboxyvinyltransferase from Deinococcus radiodurans (strain ATCC 13939 / DSM 20539 / JCM 16871 / CCUG 27074 / LMG 4051 / NBRC 15346 / NCIMB 9279 / VKM B-1422 / R1).